The chain runs to 372 residues: MALNDFHVSEPYTLGIELEMQVINPPSYDLSQDSSTLIDAVKSRLTAGEIKHDITESMLEMATGVCRDIDQAAAQLSAMQHVILQAASEHHLGICGGGTHPFQKWQRQEVCDNERYQRTLENFGYLIQQATVFGQHVHVGCANGDDAIYLLHGLSHFVPHFIALSAASPYMQGSDTRFACARLNIFSAFPDNGPMPWVSNWQEFAGLFRRLSYTTMIDSIKDLHWDIRPSPAFGTVEVRVMDTPLTLDHAINMAGLIQATAHWLLTERPFKPQEQDYLLYKFNRFQACRYGLEGVLTDAYTGDRRRLADDTLRLLDNVTPSARKLGADSAIDALRLQVKKGGNEAQYMREFIADGGSLIGLVQKHCEIWAGQ.

This sequence belongs to the glutamate--cysteine ligase type 2 family. YbdK subfamily. As to quaternary structure, homodimer.

The catalysed reaction is L-cysteine + L-glutamate + ATP = gamma-L-glutamyl-L-cysteine + ADP + phosphate + H(+). ATP-dependent carboxylate-amine ligase which exhibits weak glutamate--cysteine ligase activity. The sequence is that of Putative glutamate--cysteine ligase 2 (ybdK) from Salmonella choleraesuis (strain SC-B67).